A 349-amino-acid polypeptide reads, in one-letter code: Interferon regulatory factor 2 (349 aa).

A DNA-binding region (IRF tryptophan pentad repeat) is located at residues Arg5 to Pro113. 2 positions are modified to N6-acetyllysine: Lys75 and Lys78. Residues Arg117–Ser148 form a disordered region. Positions Pro125–Pro140 are enriched in basic and acidic residues. Lys137 is covalently cross-linked (Glycyl lysine isopeptide (Lys-Gly) (interchain with G-Cter in SUMO); alternate). Residue Lys137 forms a Glycyl lysine isopeptide (Lys-Gly) (interchain with G-Cter in SUMO2); alternate linkage. Lys166 participates in a covalent cross-link: Glycyl lysine isopeptide (Lys-Gly) (interchain with G-Cter in SUMO). Position 225 is a phosphoserine (Ser225). The span at Ser228 to Val239 shows a compositional bias: polar residues. The tract at residues Ser228–His251 is disordered. Residue Lys260 forms a Glycyl lysine isopeptide (Lys-Gly) (interchain with G-Cter in SUMO2) linkage. Residue Lys293 forms a Glycyl lysine isopeptide (Lys-Gly) (interchain with G-Cter in SUMO) linkage. The tract at residues Asn297–Cys349 is disordered. Over residues Ser314–Ser324 the composition is skewed to low complexity.

The protein belongs to the IRF family. As to quaternary structure, interacts with BRD7, IRF2BP1 and IRF2BP2. Interacts with CREBBP in growing cells; the interaction acetylates IRF2 and regulates IRF2-dependent H4 promoter activity. In terms of processing, acetylated by CBP/ p300 during cell-growth. Acetylation on Lys-75 is required for stimulation of H4 promoter activity. The major sites of sumoylation are Lys-137 and Lys-293. Sumoylation with SUMO1 increases its transcriptional repressor activity on IRF1 and diminishes its ability to activate ISRE and H4 promoter. Expressed throughout the epithelium of the colon. Also expressed in lamina propria.

It localises to the nucleus. Specifically binds to the upstream regulatory region of type I IFN and IFN-inducible MHC class I genes (the interferon consensus sequence (ICS)) and represses those genes. Also acts as an activator for several genes including H4 and IL7. Constitutively binds to the ISRE promoter to activate IL7. Involved in cell cycle regulation through binding the site II (HiNF-M) promoter region of H4 and activating transcription during cell growth. Antagonizes IRF1 transcriptional activation. This chain is Interferon regulatory factor 2 (IRF2), found in Homo sapiens (Human).